The following is a 250-amino-acid chain: Probable transcriptional regulatory protein Cag_0165 (250 aa).

The protein belongs to the TACO1 family.

The protein localises to the cytoplasm. This Chlorobium chlorochromatii (strain CaD3) protein is Probable transcriptional regulatory protein Cag_0165.